The chain runs to 565 residues: DNA repair protein RAD7 (565 aa).

Disordered regions lie at residues 1-22 and 41-68; these read MYRS…PNSA and WYQR…FTAE. Positions 1 to 200 are hydrophilic; sequence MYRSRNRPKR…SKLVFNKLRD (200 aa). A compositionally biased stretch (basic and acidic residues) spans 47 to 62; sequence KKQEDATDEKKGKAED. Phosphoserine is present on residues S64 and S85. Residues 105 to 137 are disordered; that stretch reads ADSDEEEYETSHISDTPVSLSSANDRESLTKKR. Residues 115 to 127 show a composition bias toward polar residues; that stretch reads SHISDTPVSLSSA.

This sequence to S.pombe SpCC613.14. As to quaternary structure, component of the global genome repair (GGR) complex composed of at least ABF1, RAD7 and RAD16. Interacts with ELC1.

In terms of biological role, component of the global genome repair (GGR) complex which promotes global genome nucleotide excision repair (GG-NER) which removes DNA damage from nontranscribing DNA. This protein is one of 10 proteins (RAD1, 2,3,4,7,10,14, 16,23 and MMS19) involved in excision repair of DNA damaged with UV light, bulky adducts, or cross-linking agents. This chain is DNA repair protein RAD7 (RAD7), found in Saccharomyces cerevisiae (strain ATCC 204508 / S288c) (Baker's yeast).